The following is a 363-amino-acid chain: Diheme-cytochrome-encapsulin shell fusion protein (363 aa).

The signal sequence occupies residues Met-1–Ala-36. The interval Ala-37 to Phe-74 is diheme c-type cytochrome. Residues Cys-44, Cys-47, His-48, Cys-67, Cys-70, and His-71 each coordinate heme. Residues Ala-75 to Glu-94 form a linker region. Residues Ile-95–Glu-363 are encapsulin domain.

The protein belongs to the encapsulin family. Family 1 subfamily. The encapsulin nanocompartment is probably formed by 180 monomers, with the N-terminus (diheme domain) inside. There are 36 pores where the pentamers meet as well as 3-fold axis channels and dimer channels. It depends on heme as a cofactor.

It localises to the encapsulin nanocompartment. Functionally, fusion of the shell and cargo protein of a type 1 encapsulin nanocompartment. Protein missing its signal peptide makes 33 nm particles in E.coli (called cEnc), protein missing its signal peptide and diheme domain (residues 1-86, called Enc) makes 29 nm particles. The cEnc nancompartment encloses c-type heme. The cargo protein NIR-HAO (AC P0DV45) is probably targeted to the nanocompartment by its association with the diheme domain in cEnc; removal of the diheme domain in Enc halves the amount of cargo. This Kuenenia stuttgartiensis protein is Diheme-cytochrome-encapsulin shell fusion protein.